The sequence spans 218 residues: Ribose-5-phosphate isomerase A (218 aa).

Substrate-binding positions include 28–31 (TGST), 81–84 (DGAD), and 94–97 (KGGG). Residue E103 is the Proton acceptor of the active site. K121 serves as a coordination point for substrate.

It belongs to the ribose 5-phosphate isomerase family. Homodimer.

The catalysed reaction is aldehydo-D-ribose 5-phosphate = D-ribulose 5-phosphate. It functions in the pathway carbohydrate degradation; pentose phosphate pathway; D-ribose 5-phosphate from D-ribulose 5-phosphate (non-oxidative stage): step 1/1. Functionally, catalyzes the reversible conversion of ribose-5-phosphate to ribulose 5-phosphate. The sequence is that of Ribose-5-phosphate isomerase A from Proteus mirabilis (strain HI4320).